Here is a 230-residue protein sequence, read N- to C-terminus: 2,3-bisphosphoglycerate-dependent phosphoglycerate mutase (230 aa).

Residues 8–15 (RHGQSIWN), 21–22 (TG), R60, 87–90 (ERHY), K98, and 114–115 (RR) each bind substrate. H9 serves as the catalytic Tele-phosphohistidine intermediate. Catalysis depends on E87, which acts as the Proton donor/acceptor. Residues 117 to 143 (YDTPPPALDAEDERHPRHDPRYAGLDP) form a disordered region. Positions 128 to 137 (DERHPRHDPR) are enriched in basic and acidic residues. 183-184 (GN) is a binding site for substrate.

It belongs to the phosphoglycerate mutase family. BPG-dependent PGAM subfamily. Homodimer.

It catalyses the reaction (2R)-2-phosphoglycerate = (2R)-3-phosphoglycerate. It functions in the pathway carbohydrate degradation; glycolysis; pyruvate from D-glyceraldehyde 3-phosphate: step 3/5. Functionally, catalyzes the interconversion of 2-phosphoglycerate and 3-phosphoglycerate. The chain is 2,3-bisphosphoglycerate-dependent phosphoglycerate mutase from Halorhodospira halophila (strain DSM 244 / SL1) (Ectothiorhodospira halophila (strain DSM 244 / SL1)).